The sequence spans 486 residues: Betaine aldehyde dehydrogenase (486 aa).

K(+) is bound by residues Thr23 and Asp90. 147–149 (GAW) contributes to the NAD(+) binding site. Lys159 serves as the catalytic Charge relay system. Residues 173–176 (KPSE) and 226–229 (ESGT) each bind NAD(+). A K(+)-binding site is contributed by Leu241. Glu247 serves as the catalytic Proton acceptor. NAD(+) contacts are provided by Gly249, Cys281, and Glu382. Cys281 (nucleophile) is an active-site residue. Position 281 is a cysteine sulfenic acid (-SOH) (Cys281). K(+) is bound by residues Lys452 and Gly455. Glu459 serves as the catalytic Charge relay system.

The protein belongs to the aldehyde dehydrogenase family. As to quaternary structure, dimer of dimers. K(+) is required as a cofactor.

It catalyses the reaction betaine aldehyde + NAD(+) + H2O = glycine betaine + NADH + 2 H(+). Its pathway is amine and polyamine biosynthesis; betaine biosynthesis via choline pathway; betaine from betaine aldehyde: step 1/1. Involved in the biosynthesis of the osmoprotectant glycine betaine. Catalyzes the irreversible oxidation of betaine aldehyde to the corresponding acid. The polypeptide is Betaine aldehyde dehydrogenase (Vibrio vulnificus (strain CMCP6)).